Here is a 115-residue protein sequence, read N- to C-terminus: U3-lycotoxin-Ls1o (115 aa).

A signal peptide spans 1–20 (MKFVLLFGVLLVTLFSYSSA). Positions 21–44 (EMLDDFDQADEDELLSLIEKEEAR) are excised as a propeptide. Intrachain disulfides connect Cys48/Cys63, Cys55/Cys72, Cys62/Cys87, and Cys74/Cys85.

It belongs to the neurotoxin 19 (CSTX) family. 01 subfamily. As to expression, expressed by the venom gland.

The protein localises to the secreted. This is U3-lycotoxin-Ls1o from Lycosa singoriensis (Wolf spider).